Reading from the N-terminus, the 431-residue chain is Beta-lactamase hydrolase-like protein (431 aa).

Residues histidine 212, histidine 214, and histidine 286 each coordinate Zn(2+). A substrate-binding site is contributed by aspartate 309.

This sequence belongs to the metallo-beta-lactamase superfamily. Zn(2+) is required as a cofactor.

In terms of biological role, could play a role in cell adherence or biofilm development. The chain is Beta-lactamase hydrolase-like protein from Xylella fastidiosa (strain 9a5c).